The sequence spans 584 residues: tRNA-guanine(15) transglycosylase (584 aa).

Residue D95 is the Nucleophile of the active site. Substrate contacts are provided by D130 and G196. 3 residues coordinate Zn(2+): C279, C281, and C284. The 76-residue stretch at 507–582 folds into the PUA domain; it reads RMRVVVSEEA…RAVKVRRGIS (76 aa).

The protein belongs to the archaeosine tRNA-ribosyltransferase family. Requires Zn(2+) as cofactor.

It catalyses the reaction guanosine(15) in tRNA + 7-cyano-7-deazaguanine = 7-cyano-7-carbaguanosine(15) in tRNA + guanine. Its pathway is tRNA modification; archaeosine-tRNA biosynthesis. Exchanges the guanine residue with 7-cyano-7-deazaguanine (preQ0) at position 15 in the dihydrouridine loop (D-loop) of archaeal tRNAs. The polypeptide is tRNA-guanine(15) transglycosylase (Pyrococcus abyssi (strain GE5 / Orsay)).